The following is a 298-amino-acid chain: Ribosomal RNA small subunit methyltransferase H (298 aa).

S-adenosyl-L-methionine contacts are provided by residues 31–33, Asp-50, Tyr-80, Asp-95, and Gln-102; that span reads GGH. The segment at 255-298 is disordered; the sequence is AEKDLYGNTNKPFKSVGKAIDPDDEEKERNNRARSARLRIAERE.

Belongs to the methyltransferase superfamily. RsmH family.

It localises to the cytoplasm. The catalysed reaction is cytidine(1402) in 16S rRNA + S-adenosyl-L-methionine = N(4)-methylcytidine(1402) in 16S rRNA + S-adenosyl-L-homocysteine + H(+). Its function is as follows. Specifically methylates the N4 position of cytidine in position 1402 (C1402) of 16S rRNA. In Cytophaga hutchinsonii (strain ATCC 33406 / DSM 1761 / CIP 103989 / NBRC 15051 / NCIMB 9469 / D465), this protein is Ribosomal RNA small subunit methyltransferase H.